Reading from the N-terminus, the 182-residue chain is Translation initiation factor IF-3 (182 aa).

Belongs to the IF-3 family. Monomer.

The protein localises to the cytoplasm. Functionally, IF-3 binds to the 30S ribosomal subunit and shifts the equilibrium between 70S ribosomes and their 50S and 30S subunits in favor of the free subunits, thus enhancing the availability of 30S subunits on which protein synthesis initiation begins. This Endomicrobium trichonymphae protein is Translation initiation factor IF-3.